The primary structure comprises 463 residues: Heterogeneous nuclear ribonucleoprotein K (463 aa).

N-acetylmethionine is present on Met-1. The segment at 1–37 is disordered; it reads METEQPEETFPNTETNGEFGKRPAEDMEEEQAFKRSR. Positions 1–276 are necessary for interaction with DDX1; sequence METEQPEETF…GRGGRPMPPS (276 aa). The span at 19–37 shows a compositional bias: basic and acidic residues; that stretch reads FGKRPAEDMEEEQAFKRSR. Lys-34 carries the post-translational modification N6-acetyllysine; alternate. Lys-34 is covalently cross-linked (Glycyl lysine isopeptide (Lys-Gly) (interchain with G-Cter in SUMO1); alternate). A Glycyl lysine isopeptide (Lys-Gly) (interchain with G-Cter in SUMO2); alternate cross-link involves residue Lys-34. The interval 35–197 is interaction with ASFV p30; the sequence is RSRNTDEMVE…STDRVVLIGG (163 aa). The residue at position 36 (Ser-36) is a Phosphoserine. Phosphothreonine is present on Thr-39. One can recognise a KH 1 domain in the interval 42 to 104; that stretch reads MVELRILLQS…ETIGEILKKI (63 aa). Glycyl lysine isopeptide (Lys-Gly) (interchain with G-Cter in SUMO2) cross-links involve residues Lys-52 and Lys-60. Repeat copies occupy residues 54 to 76 and 59 to 62. Positions 54-421 are 2 X 22 AA approximate repeats; it reads AGAVIGKGGK…QIRHESGASI (368 aa). A 5 X 4 AA repeats of G-X-G-G region spans residues 59 to 407; sequence GKGGKNIKAL…LAGSIIGKGG (349 aa). Phosphoserine is present on residues Ser-75 and Ser-116. Positions 144 to 209 constitute a KH 2 domain; sequence DCELRLLIHQ…DRVVECIKII (66 aa). A Glycyl lysine isopeptide (Lys-Gly) (interchain with G-Cter in SUMO1); alternate cross-link involves residue Lys-163. Residue Lys-163 forms a Glycyl lysine isopeptide (Lys-Gly) (interchain with G-Cter in SUMO2); alternate linkage. An N6-acetyllysine modification is found at Lys-198. Residues 209 to 337 are interaction with ZIK1; it reads ILDLISESPI…RPGDRYDGMV (129 aa). Ser-214 and Ser-216 each carry phosphoserine. Residue Lys-219 forms a Glycyl lysine isopeptide (Lys-Gly) (interchain with G-Cter in SUMO2); alternate linkage. Lys-219 carries the post-translational modification N6-succinyllysine; alternate. The RNA-binding RGG-box stretch occupies residues 236–273; that stretch reads YGGFTMMFDDRRGRPVGFPMRGRGGFDRMPPGRGGRPM. 3 consecutive repeat copies span residues 245-250, 257-260, and 267-270. A 2 X 6 AA approximate repeats region spans residues 245-329; sequence DRRGRPVGFP…LMAYDRRGRP (85 aa). Positions 250–329 are disordered; that stretch reads PVGFPMRGRG…LMAYDRRGRP (80 aa). Residues 252 to 266 show a composition bias toward low complexity; sequence GFPMRGRGGFDRMPP. Basic and acidic residues predominate over residues 276–285; the sequence is SRRDYDDMSP. Residue Ser-284 is modified to Phosphoserine. One copy of the 3-4 repeat lies at 295–298; sequence GRGG. Arg-316 carries the post-translational modification Omega-N-methylarginine. The 2-2 repeat unit spans residues 324–329; that stretch reads DRRGRP. Position 377 is an omega-N-methylarginine (Arg-377). Ser-379 bears the Phosphoserine mark. Tyr-380 is subject to Phosphotyrosine. One can recognise a KH 3 domain in the interval 387-451; that stretch reads IITTQVTIPK…DQIQNAQYLL (65 aa). 2 tandem repeats follow at residues 399 to 421 and 404 to 407. Residue Lys-405 is modified to N6-acetyllysine; alternate. Lys-405 participates in a covalent cross-link: Glycyl lysine isopeptide (Lys-Gly) (interchain with G-Cter in SUMO2); alternate. Position 420 is a phosphoserine (Ser-420). Lys-422 participates in a covalent cross-link: Glycyl lysine isopeptide (Lys-Gly) (interchain with G-Cter in SUMO1); alternate. Lys-422 is covalently cross-linked (Glycyl lysine isopeptide (Lys-Gly) (interchain with G-Cter in SUMO2); alternate). A Glycyl lysine isopeptide (Lys-Gly) (interchain with G-Cter in SUMO); alternate cross-link involves residue Lys-422.

As to quaternary structure, identified in the spliceosome C complex. Part of a transcription inhibitory ribonucleoprotein complex composed at least of the circular RNA circZNF827, ZNF827 and HNRNPL. Interacts with RBM42 and ZIK1. Interacts with BRDT. Interacts with ANKRD28. Interacts with ASFV p30 protein. Interacts with DDX1. Interacts with MDM2; this interaction leads to ubiquitination and proteasomal degradation. Interacts with p53/TP53. Interacts with IVNS1ABP (via BACK domain); the interaction is direct. Interacts with PPIA/CYPA. (Microbial infection) Interacts with HCV core protein. Post-translationally, arg-296 and Arg-299 are dimethylated, probably to asymmetric dimethylarginine. Sumoylated by CBX4. Sumoylation is increased upon DNA damage, such as that produced by doxorubicin, etoposide, UV light and camptothecin, due to enhanced CBX4 phosphorylation by HIPK2 under these conditions. In terms of processing, ubiquitinated by MDM2. Doxorubicin treatment does not affect monoubiquitination, but slightly decreases HNRNPK poly-ubiquitination. Post-translationally, O-glycosylated (O-GlcNAcylated), in a cell cycle-dependent manner.

It localises to the cytoplasm. The protein resides in the nucleus. Its subcellular location is the nucleoplasm. The protein localises to the cell projection. It is found in the podosome. One of the major pre-mRNA-binding proteins. Binds tenaciously to poly(C) sequences. Likely to play a role in the nuclear metabolism of hnRNAs, particularly for pre-mRNAs that contain cytidine-rich sequences. Can also bind poly(C) single-stranded DNA. Plays an important role in p53/TP53 response to DNA damage, acting at the level of both transcription activation and repression. When sumoylated, acts as a transcriptional coactivator of p53/TP53, playing a role in p21/CDKN1A and 14-3-3 sigma/SFN induction. As far as transcription repression is concerned, acts by interacting with long intergenic RNA p21 (lincRNA-p21), a non-coding RNA induced by p53/TP53. This interaction is necessary for the induction of apoptosis, but not cell cycle arrest. As part of a ribonucleoprotein complex composed at least of ZNF827, HNRNPL and the circular RNA circZNF827 that nucleates the complex on chromatin, may negatively regulate the transcription of genes involved in neuronal differentiation. This chain is Heterogeneous nuclear ribonucleoprotein K (HNRNPK), found in Homo sapiens (Human).